The sequence spans 637 residues: Threonine--tRNA ligase (637 aa).

The TGS domain maps to 1–61 (MPVITLPNGS…EQDAALSIVT (61 aa)). The catalytic stretch occupies residues 242-533 (DHRKLGKKFD…LIENYEGAFP (292 aa)). The Zn(2+) site is built by Cys-333, His-384, and His-510.

It belongs to the class-II aminoacyl-tRNA synthetase family. As to quaternary structure, homodimer. The cofactor is Zn(2+).

It is found in the cytoplasm. The enzyme catalyses tRNA(Thr) + L-threonine + ATP = L-threonyl-tRNA(Thr) + AMP + diphosphate + H(+). Catalyzes the attachment of threonine to tRNA(Thr) in a two-step reaction: L-threonine is first activated by ATP to form Thr-AMP and then transferred to the acceptor end of tRNA(Thr). Also edits incorrectly charged L-seryl-tRNA(Thr). The protein is Threonine--tRNA ligase of Teredinibacter turnerae (strain ATCC 39867 / T7901).